The following is a 149-amino-acid chain: Calmodulin (149 aa).

Ala2 bears the N-acetylalanine mark. EF-hand domains lie at 8 to 43, 44 to 79, 81 to 116, and 117 to 149; these read EQIA…LGQN, PTEA…KMKD, DSEE…LGEK, and LTDE…MTAK. Positions 21, 23, 25, 27, 32, 57, 59, 61, 63, 68, 94, 96, 98, 100, and 105 each coordinate Ca(2+). Lys116 carries the post-translational modification N6,N6,N6-trimethyllysine. Asp130, Asp132, Asp134, Gln136, and Glu141 together coordinate Ca(2+).

It belongs to the calmodulin family.

Its function is as follows. Calmodulin acts as part of a calcium signal transduction pathway by mediating the control of a large number of enzymes, ion channels, aquaporins and other proteins through calcium-binding. Calcium-binding is required for the activation of calmodulin. Among the enzymes to be stimulated by the calmodulin-calcium complex are a number of protein kinases, such as myosin light-chain kinases and calmodulin-dependent protein kinase type II (CaMK2), and phosphatases. The chain is Calmodulin (calm) from Epinephelus akaara (Hong Kong grouper).